Consider the following 296-residue polypeptide: Acetyl-coenzyme A carboxylase carboxyl transferase subunit beta (296 aa).

Residues 25 to 294 (VWTKCTSCEQ…PFVEPELISE (270 aa)) enclose the CoA carboxyltransferase N-terminal domain. Zn(2+) contacts are provided by cysteine 29, cysteine 32, cysteine 48, and cysteine 51. The segment at 29 to 51 (CTSCEQVLYSEELKRNLYVCPKC) adopts a C4-type zinc-finger fold.

Belongs to the AccD/PCCB family. In terms of assembly, acetyl-CoA carboxylase is a heterohexamer composed of biotin carboxyl carrier protein (AccB), biotin carboxylase (AccC) and two subunits each of ACCase subunit alpha (AccA) and ACCase subunit beta (AccD). Zn(2+) is required as a cofactor.

Its subcellular location is the cytoplasm. It catalyses the reaction N(6)-carboxybiotinyl-L-lysyl-[protein] + acetyl-CoA = N(6)-biotinyl-L-lysyl-[protein] + malonyl-CoA. Its pathway is lipid metabolism; malonyl-CoA biosynthesis; malonyl-CoA from acetyl-CoA: step 1/1. Component of the acetyl coenzyme A carboxylase (ACC) complex. Biotin carboxylase (BC) catalyzes the carboxylation of biotin on its carrier protein (BCCP) and then the CO(2) group is transferred by the transcarboxylase to acetyl-CoA to form malonyl-CoA. The polypeptide is Acetyl-coenzyme A carboxylase carboxyl transferase subunit beta (Haemophilus influenzae (strain PittEE)).